We begin with the raw amino-acid sequence, 270 residues long: Extracellular metalloprotease MCYG_04966 (270 aa).

Residues 1 to 19 (MRLSLFLSGLAAAGSIVSA) form the signal peptide. Asparagine 135 carries an N-linked (GlcNAc...) asparagine glycan. Histidine 184 is a binding site for Zn(2+). Glutamate 185 is an active-site residue. Zn(2+) is bound at residue histidine 188. N-linked (GlcNAc...) asparagine glycosylation occurs at asparagine 199. Positions 208-227 (VADTPPQSKKTSGCPNSQDS) are disordered. A compositionally biased stretch (polar residues) spans 212 to 227 (PPQSKKTSGCPNSQDS). A disulfide bridge links cysteine 221 with cysteine 247.

It belongs to the peptidase M43B family.

The protein localises to the secreted. Functionally, secreted metalloproteinase that allows assimilation of proteinaceous substrates. Plays a pivotal role as a pathogenicity determinant during infections and contributes to the ability of the pathogen to persist within the mammalian host. The chain is Extracellular metalloprotease MCYG_04966 from Arthroderma otae (strain ATCC MYA-4605 / CBS 113480) (Microsporum canis).